The sequence spans 298 residues: Probable endonuclease 4 (298 aa).

Zn(2+) is bound by residues His69, His111, Glu146, Asp180, His183, His215, Asp228, His230, and Glu260.

The protein belongs to the AP endonuclease 2 family. Zn(2+) is required as a cofactor.

The catalysed reaction is Endonucleolytic cleavage to 5'-phosphooligonucleotide end-products.. Functionally, endonuclease IV plays a role in DNA repair. It cleaves phosphodiester bonds at apurinic or apyrimidinic (AP) sites, generating a 3'-hydroxyl group and a 5'-terminal sugar phosphate. In Bacillus anthracis (strain A0248), this protein is Probable endonuclease 4.